The primary structure comprises 322 residues: NADH-quinone oxidoreductase subunit H (322 aa).

The next 8 membrane-spanning stretches (helical) occupy residues 12 to 32 (IGKA…MSFI), 79 to 99 (IFVL…AVVP), 111 to 131 (VGLL…LFAG), 151 to 171 (LSYE…TGSF), 183 to 203 (LWNV…GVAV), 234 to 254 (FFVG…TLFF), 262 to 282 (LPPF…FILL), and 301 to 321 (VCLP…LMNA).

It belongs to the complex I subunit 1 family. In terms of assembly, NDH-1 is composed of 14 different subunits. Subunits NuoA, H, J, K, L, M, N constitute the membrane sector of the complex.

It is found in the cell inner membrane. It catalyses the reaction a quinone + NADH + 5 H(+)(in) = a quinol + NAD(+) + 4 H(+)(out). In terms of biological role, NDH-1 shuttles electrons from NADH, via FMN and iron-sulfur (Fe-S) centers, to quinones in the respiratory chain. The immediate electron acceptor for the enzyme in this species is believed to be ubiquinone. Couples the redox reaction to proton translocation (for every two electrons transferred, four hydrogen ions are translocated across the cytoplasmic membrane), and thus conserves the redox energy in a proton gradient. This subunit may bind ubiquinone. The polypeptide is NADH-quinone oxidoreductase subunit H (Aeromonas hydrophila subsp. hydrophila (strain ATCC 7966 / DSM 30187 / BCRC 13018 / CCUG 14551 / JCM 1027 / KCTC 2358 / NCIMB 9240 / NCTC 8049)).